Consider the following 570-residue polypeptide: Sulfite reductase [NADPH] hemoprotein beta-component (570 aa).

Residues C434, C440, C479, and C483 each coordinate [4Fe-4S] cluster. C483 contacts siroheme.

It belongs to the nitrite and sulfite reductase 4Fe-4S domain family. Alpha(8)-beta(8). The alpha component is a flavoprotein, the beta component is a hemoprotein. The cofactor is siroheme. Requires [4Fe-4S] cluster as cofactor.

It carries out the reaction hydrogen sulfide + 3 NADP(+) + 3 H2O = sulfite + 3 NADPH + 4 H(+). It functions in the pathway sulfur metabolism; hydrogen sulfide biosynthesis; hydrogen sulfide from sulfite (NADPH route): step 1/1. Functionally, component of the sulfite reductase complex that catalyzes the 6-electron reduction of sulfite to sulfide. This is one of several activities required for the biosynthesis of L-cysteine from sulfate. This chain is Sulfite reductase [NADPH] hemoprotein beta-component, found in Escherichia coli O127:H6 (strain E2348/69 / EPEC).